Consider the following 31-residue polypeptide: Circulin-B (31 aa).

The cyclopeptide (Gly-Asn) cross-link spans 1 to 31; the sequence is GVIPCGESCVFIPCISTLLGCSCKNKVCYRN. Disulfide bonds link cysteine 5/cysteine 21, cysteine 9/cysteine 23, and cysteine 14/cysteine 28.

In terms of processing, this is a cyclic peptide.

Its function is as follows. Probably participates in a plant defense mechanism. Has antibiotic activity. Inhibits the cytopathic effects and replication of the human immunodeficiency virus. Active against both Gram-positive and Gram-negative bacteria. The polypeptide is Circulin-B (Chassalia parviflora).